The primary structure comprises 134 residues: Insulin-like peptide 4 (134 aa).

Positions Met-1 to Gly-26 are cleaved as a signal peptide. Intrachain disulfides connect Cys-31–Cys-120, Cys-43–Cys-133, and Cys-119–Cys-124. Residues Ser-54 to Leu-108 constitute a propeptide, connecting peptide. A disordered region spans residues Pro-72–Lys-107. The segment covering Glu-81 to Lys-96 has biased composition (basic and acidic residues).

Belongs to the insulin family. In terms of assembly, heterodimer of a B chain and an A chain linked by two disulfide bonds. As to expression, expressed at a high level in the embryonic mesoderm, with expression continuing after gastrulation and reducing from stage 12 onwards. Highly expressed in the embryonic anterior midgut rudiment and larval midgut.

The protein resides in the secreted. In terms of biological role, possible ligand of InR/insulin-like receptor. The polypeptide is Insulin-like peptide 4 (Drosophila melanogaster (Fruit fly)).